Here is a 342-residue protein sequence, read N- to C-terminus: S-adenosylmethionine:tRNA ribosyltransferase-isomerase (342 aa).

This sequence belongs to the QueA family. In terms of assembly, monomer.

It localises to the cytoplasm. It carries out the reaction 7-aminomethyl-7-carbaguanosine(34) in tRNA + S-adenosyl-L-methionine = epoxyqueuosine(34) in tRNA + adenine + L-methionine + 2 H(+). It participates in tRNA modification; tRNA-queuosine biosynthesis. Functionally, transfers and isomerizes the ribose moiety from AdoMet to the 7-aminomethyl group of 7-deazaguanine (preQ1-tRNA) to give epoxyqueuosine (oQ-tRNA). In Streptococcus pyogenes serotype M12 (strain MGAS2096), this protein is S-adenosylmethionine:tRNA ribosyltransferase-isomerase.